The following is a 463-amino-acid chain: Glycine--tRNA ligase (463 aa).

2 residues coordinate substrate: Arg-98 and Glu-174. Residues 206-208, 216-221, 290-291, and 334-337 contribute to the ATP site; these read RNE, FRTREF, EL, and GADR. 221–225 contacts substrate; that stretch reads FEQME. A substrate-binding site is contributed by 330–334; that stretch reads EPSLG.

This sequence belongs to the class-II aminoacyl-tRNA synthetase family. Homodimer.

Its subcellular location is the cytoplasm. The catalysed reaction is tRNA(Gly) + glycine + ATP = glycyl-tRNA(Gly) + AMP + diphosphate. In terms of biological role, catalyzes the attachment of glycine to tRNA(Gly). This Staphylococcus epidermidis (strain ATCC 35984 / DSM 28319 / BCRC 17069 / CCUG 31568 / BM 3577 / RP62A) protein is Glycine--tRNA ligase.